The following is a 245-amino-acid chain: Fibroblast growth factor 13 (245 aa).

Disordered regions lie at residues 1–37 (MAAAIASSLIRQKRQAREREKSNACKCVSSPSKSKGN) and 213–245 (TEFSRSGSGTPTKSRSVSGVLNGGKSMSQNDST). The interval 1 to 62 (MAAAIASSLI…GSKKRRRRRP (62 aa)) is mediates targeting to the nucleus. Residues 215 to 245 (FSRSGSGTPTKSRSVSGVLNGGKSMSQNDST) are compositionally biased toward polar residues.

It belongs to the heparin-binding growth factors family.

The protein resides in the cell projection. It is found in the filopodium. It localises to the growth cone. The protein localises to the dendrite. Its subcellular location is the cell membrane. The protein resides in the sarcolemma. It is found in the cytoplasm. In terms of biological role, microtubule-binding protein which directly binds tubulin and is involved in both polymerization and stabilization of microtubules. Through its action on microtubules, may participate in the refinement of axons by negatively regulating axonal and leading processes branching. Plays a crucial role in neuron polarization and migration. Regulates voltage-gated sodium channel transport and function. Required for proper head development, it is involved in neural differentiation through regulation of the mek5-erk5 pathway. The chain is Fibroblast growth factor 13 (fgf13) from Xenopus laevis (African clawed frog).